The sequence spans 558 residues: SPATS2-like protein (558 aa).

Ala2 carries the N-acetylalanine modification. Residues 63–79 are compositionally biased toward basic residues; that stretch reads GKKKNNKRKRSKSKQHQ. The disordered stretch occupies residues 63–204; it reads GKKKNNKRKR…SPVKSNAPAA (142 aa). Basic and acidic residues-rich tracts occupy residues 80 to 92 and 110 to 142; these read GNKDAKDKVERPE and GCEKDSSSPDSTREKLALTPREKKISILEEPPR. Ser120 is modified (phosphoserine). Residues 279–344 are a coiled coil; it reads KEEAMDILTA…ARFSCDIEQL (66 aa). Disordered regions lie at residues 385 to 406 and 421 to 514; these read GNFARKSSGHNKPSEGKAANPK and TMPT…RQHA. The span at 421–433 shows a compositional bias: polar residues; the sequence is TMPTNKQQNGPSS. Over residues 469–485 the composition is skewed to basic residues; it reads HEHRRQPHNGFRPKNKG.

Belongs to the SPATS2 family.

The protein resides in the cytoplasm. It localises to the nucleus. The protein localises to the nucleolus. The polypeptide is SPATS2-like protein (Spats2l) (Mus musculus (Mouse)).